A 181-amino-acid polypeptide reads, in one-letter code: Oligoribonuclease (181 aa).

The Exonuclease domain occupies 8 to 171 (LIWVDLEMTG…DDIRESIAEL (164 aa)). The active site involves Tyr-129.

This sequence belongs to the oligoribonuclease family.

Its subcellular location is the cytoplasm. Its function is as follows. 3'-to-5' exoribonuclease specific for small oligoribonucleotides. The sequence is that of Oligoribonuclease from Aliivibrio fischeri (strain ATCC 700601 / ES114) (Vibrio fischeri).